A 380-amino-acid chain; its full sequence is DNA replication and repair protein RecF (380 aa).

G30 to T37 serves as a coordination point for ATP.

This sequence belongs to the RecF family.

Its subcellular location is the cytoplasm. The RecF protein is involved in DNA metabolism; it is required for DNA replication and normal SOS inducibility. RecF binds preferentially to single-stranded, linear DNA. It also seems to bind ATP. The sequence is that of DNA replication and repair protein RecF from Synechococcus sp. (strain JA-3-3Ab) (Cyanobacteria bacterium Yellowstone A-Prime).